The following is a 502-amino-acid chain: Lysine--tRNA ligase (502 aa).

Residues E398 and E405 each coordinate Mg(2+).

It belongs to the class-II aminoacyl-tRNA synthetase family. Homodimer. The cofactor is Mg(2+).

The protein localises to the cytoplasm. It catalyses the reaction tRNA(Lys) + L-lysine + ATP = L-lysyl-tRNA(Lys) + AMP + diphosphate. This chain is Lysine--tRNA ligase (lysS), found in Thermotoga maritima (strain ATCC 43589 / DSM 3109 / JCM 10099 / NBRC 100826 / MSB8).